The chain runs to 891 residues: Longitudinals lacking protein, isoform G (891 aa).

One can recognise a BTB domain in the interval 32–97 (VDCTLAAEGK…MYRGEVNISQ (66 aa)). Disordered stretches follow at residues 115–200 (LSDN…SSVL) and 228–340 (SSGP…ASAS). Residue serine 140 is modified to Phosphoserine. Threonine 161 is modified (phosphothreonine). Phosphoserine is present on residues serine 162 and serine 168. Low complexity-rich tracts occupy residues 162–175 (SGDVSGSREGSSSP), 228–251 (SSGPAAGTSSQASSTQQQQPLTST), 263–293 (TSSTAAPASGASASAAVQQAHLHQQQAQTTS), and 329–340 (NSATGPNPASAS). 3 positions are modified to phosphoserine: serine 372, serine 375, and serine 378. A disordered region spans residues 446-467 (QDAQQRDPQDLSRKENTAPDVA). Residues 449–462 (QQRDPQDLSRKENT) are compositionally biased toward basic and acidic residues. Phosphoserine occurs at positions 696 and 705. Threonine 706 is modified (phosphothreonine). Residues serine 749 and serine 750 each carry the phosphoserine modification. The C2H2-type 1; degenerate zinc-finger motif lies at 791-813 (YECRHCGKKYRWKSTLRRHENVE). Residues 821–843 (HQCPYCPYKSKQRGNLGVHVRKH) form a C2H2-type 2 zinc finger. A disordered region spans residues 840–891 (VRKHHTDLPQLPSKRRSKYSMNRENGMSGSMSDDSQGKLIIDFNGKGELETK). Residue serine 874 is modified to Phosphoserine.

Expressed in both mesoderm and ectoderm with expression highest in the mesectoderm by stage 11. Becomes enriched in a cluster of brain cells, in abdominal histoblasts, and in the embryonic imaginal disks during later stages.

It localises to the nucleus. Functionally, putative transcription factor required for axon growth and guidance in the central and peripheral nervous systems. Repels CNS axons away from the midline by promoting the expression of the midline repellent sli and its receptor robo. This chain is Longitudinals lacking protein, isoform G, found in Drosophila melanogaster (Fruit fly).